A 30-amino-acid chain; its full sequence is Acyl-CoA-binding protein 1 (30 aa).

Positions 1 to 15 are enriched in basic and acidic residues; that stretch reads ALKDEFEEHAEKAKT. The disordered stretch occupies residues 1 to 30; that stretch reads ALKDEFEEHAEKAKTLPENTSNENKLILYG. Positions 2–30 constitute an ACB domain; it reads LKDEFEEHAEKAKTLPENTSNENKLILYG.

It belongs to the ACBP family.

The protein localises to the cytoplasm. Functionally, binds medium- and long-chain acyl-CoA esters with very high affinity and may function as an intracellular carrier of acyl-CoA esters. This is Acyl-CoA-binding protein 1 from Digitalis lanata (Grecian foxglove).